The following is a 263-amino-acid chain: Protein IQ-DOMAIN 9 (263 aa).

The tract at residues 16 to 41 is disordered; that stretch reads SKQGTEKKKTSAVKPKKGSKKKGTSL. Positions 21-28 match the Nuclear localization signal 1 motif; the sequence is EKKKTSAV. Residues 25 to 38 show a composition bias toward basic residues; it reads TSAVKPKKGSKKKG. Residues 46 to 75 enclose the IQ domain; sequence EDWAATRIQTAFKAYKARKSLRRLKGIARA. Residues 59 to 78 are calmodulin-binding; it reads AYKARKSLRRLKGIARAKLS. A Nuclear localization signal 2 motif is present at residues 107 to 114; it reads ARRVCMVT. The tract at residues 216–263 is disordered; sequence TPKKPKSSKTDSNSPAKRTVSLSSVPAKTPFPGARNTVKPRRLSFPGA. The segment covering 226–241 has biased composition (polar residues); sequence DSNSPAKRTVSLSSVP.

Belongs to the IQD family. As to quaternary structure, binds to multiple calmodulin (CaM) in the presence of Ca(2+) and CaM-like proteins.

It is found in the nucleus. It localises to the nuclear body. Its function is as follows. May be involved in cooperative interactions with calmodulins or calmodulin-like proteins. Recruits calmodulin proteins to microtubules, thus being a potential scaffold in cellular signaling and trafficking. May associate with nucleic acids and regulate gene expression at the transcriptional or post-transcriptional level. The polypeptide is Protein IQ-DOMAIN 9 (Arabidopsis thaliana (Mouse-ear cress)).